Reading from the N-terminus, the 219-residue chain is Small ribosomal subunit protein uS3 (219 aa).

The region spanning 38 to 106 (VRKFVKTKLQ…QVAVNIVEVK (69 aa)) is the KH type-2 domain.

The protein belongs to the universal ribosomal protein uS3 family. Part of the 30S ribosomal subunit. Forms a tight complex with proteins S10 and S14.

Its function is as follows. Binds the lower part of the 30S subunit head. Binds mRNA in the 70S ribosome, positioning it for translation. This Desulfitobacterium hafniense (strain DSM 10664 / DCB-2) protein is Small ribosomal subunit protein uS3.